A 779-amino-acid chain; its full sequence is Transcription factor SPT20 homolog (779 aa).

Ser-296 is subject to Phosphoserine. Disordered stretches follow at residues Asp-373 to Asn-392 and Pro-420 to Lys-507. Residues Ser-424–Ser-437 show a composition bias toward low complexity. Positions Thr-445–Val-454 are enriched in polar residues. Residues Ser-470 to Asn-479 show a composition bias toward low complexity. A Phosphothreonine modification is found at Thr-494. Ser-519 and Ser-524 each carry phosphoserine. 2 disordered regions span residues Gln-641–Leu-677 and Leu-755–Phe-779. Residues Leu-755–Arg-771 are compositionally biased toward basic residues.

It belongs to the SPT20 family. As to quaternary structure, interacts with MAPK14. Interacts with ATG9A. As to expression, highly expressed in testis, moderately in brain and pituitary gland. Expressed in several fetal tissues, including lung, brain, thymus and kidney. Expression is down-regulated in malignant prostate tissues.

Its subcellular location is the nucleus. Functionally, required for MAP kinase p38 (MAPK11, MAPK12, MAPK13 and/or MAPK14) activation during gastrulation. Required for down-regulation of E-cadherin during gastrulation by regulating E-cadherin protein level downstream from NCK-interacting kinase (NIK) and independently of the regulation of transcription by FGF signaling and Snail. Required for starvation-induced ATG9A trafficking during autophagy. This Homo sapiens (Human) protein is Transcription factor SPT20 homolog (SUPT20H).